Reading from the N-terminus, the 309-residue chain is Acetylglutamate kinase (309 aa).

Residues G69–G70, R91, and N194 contribute to the substrate site.

Belongs to the acetylglutamate kinase family. ArgB subfamily.

Its subcellular location is the cytoplasm. The enzyme catalyses N-acetyl-L-glutamate + ATP = N-acetyl-L-glutamyl 5-phosphate + ADP. It participates in amino-acid biosynthesis; L-arginine biosynthesis; N(2)-acetyl-L-ornithine from L-glutamate: step 2/4. Functionally, catalyzes the ATP-dependent phosphorylation of N-acetyl-L-glutamate. The protein is Acetylglutamate kinase of Vesicomyosocius okutanii subsp. Calyptogena okutanii (strain HA).